The following is a 360-amino-acid chain: Cyclin-D1-binding protein 1 (360 aa).

Alanine 2 is subject to N-acetylalanine. Interaction with TCF3 regions lie at residues 2-184 (ASAT…VDFV) and 150-360 (ISYN…ELEL). Interaction with RPLP0 regions lie at residues 2–190 (ASAT…AHEE) and 240–360 (LIIP…ELEL). The required for interaction with CCND1 stretch occupies residues 2 to 208 (ASATAPAAAV…DPYSGLLNDT (207 aa)).

The protein belongs to the CCNDBP1 family. As to quaternary structure, interacts with CCND1 and GRAP2. May also interact with COPS5, RPLP0, SIRT6, SYF2 and TCF3. Phosphorylated. As to expression, ubiquitously expressed. Expression is down-regulated in a variety of tumor types including breast, colon, prostate and rectal tumors, and is up-regulated in certain hepatic carcinomas.

It localises to the cytoplasm. The protein localises to the nucleus. Functionally, may negatively regulate cell cycle progression. May act at least in part via inhibition of the cyclin-D1/CDK4 complex, thereby preventing phosphorylation of RB1 and blocking E2F-dependent transcription. This chain is Cyclin-D1-binding protein 1 (CCNDBP1), found in Homo sapiens (Human).